Consider the following 272-residue polypeptide: uncharacterized protein (272 aa).

Residues aspartate 71 and glutamate 163 contribute to the active site.

This sequence belongs to the glycosyl hydrolase 25 family.

This is an uncharacterized protein from Escherichia coli O6:H1 (strain CFT073 / ATCC 700928 / UPEC).